The sequence spans 192 residues: Inosine triphosphate pyrophosphatase (192 aa).

Residue 10–15 coordinates ITP; sequence TGNANK. Position 46 (glutamate 46) interacts with Mg(2+). ITP contacts are provided by residues lysine 58, 74-75, lysine 91, 149-152, lysine 172, and 177-178; these read DT, FGWD, and HR.

This sequence belongs to the HAM1 NTPase family. Homodimer. Mg(2+) serves as cofactor. The cofactor is Mn(2+).

It is found in the cytoplasm. The protein resides in the nucleus. The catalysed reaction is ITP + H2O = IMP + diphosphate + H(+). The enzyme catalyses dITP + H2O = dIMP + diphosphate + H(+). It catalyses the reaction XTP + H2O = XMP + diphosphate + H(+). In terms of biological role, pyrophosphatase that hydrolyzes non-canonical purine nucleotides such as inosine triphosphate (ITP), deoxyinosine triphosphate (dITP) or xanthosine 5'-triphosphate (XTP) to their respective monophosphate derivatives. The enzyme does not distinguish between the deoxy- and ribose forms. Probably excludes non-canonical purines from RNA and DNA precursor pools, thus preventing their incorporation into RNA and DNA and avoiding chromosomal lesions. In Puccinia graminis f. sp. tritici (strain CRL 75-36-700-3 / race SCCL) (Black stem rust fungus), this protein is Inosine triphosphate pyrophosphatase.